The chain runs to 149 residues: Glutamyl-tRNA(Gln) amidotransferase subunit C, mitochondrial (149 aa).

The protein belongs to the GatC family. In terms of assembly, subunit of the heterotrimeric GatCAB amidotransferase (AdT) complex, composed of A, B and C subunits.

It is found in the mitochondrion. The enzyme catalyses L-glutamyl-tRNA(Gln) + L-glutamine + ATP + H2O = L-glutaminyl-tRNA(Gln) + L-glutamate + ADP + phosphate + H(+). In terms of biological role, allows the formation of correctly charged Gln-tRNA(Gln) through the transamidation of misacylated Glu-tRNA(Gln) in the mitochondria. The reaction takes place in the presence of glutamine and ATP through an activated gamma-phospho-Glu-tRNA(Gln). The sequence is that of Glutamyl-tRNA(Gln) amidotransferase subunit C, mitochondrial from Trichoplax adhaerens (Trichoplax reptans).